A 491-amino-acid polypeptide reads, in one-letter code: Cytochrome P450 2F3 (491 aa).

Residue Cys436 participates in heme binding.

This sequence belongs to the cytochrome P450 family. Requires heme as cofactor. In terms of tissue distribution, lung specific.

It is found in the endoplasmic reticulum membrane. It localises to the microsome membrane. It carries out the reaction an organic molecule + reduced [NADPH--hemoprotein reductase] + O2 = an alcohol + oxidized [NADPH--hemoprotein reductase] + H2O + H(+). In terms of biological role, bioactivates 3-methylindole (3MI) by dehydrogenation to the putative electrophile 3-methylene-indolenine. Stereoselectively catalyzes the formation of the 1R,2S-oxide from naphthalene. Lack activity with other common P450 substrates including 7-ethoxycoumarin. This is Cytochrome P450 2F3 (CYP2F3) from Capra hircus (Goat).